Consider the following 382-residue polypeptide: Protein delta homolog 2 (382 aa).

The N-terminal stretch at 1–26 (MPSGCRCLNLVCLLCILGATSQPARA) is a signal peptide. 4 consecutive EGF-like domains span residues 27–58 (DDCS…LHCE), 62–89 (RMPG…KFCD), 91–129 (DEHI…RGCE), and 131–172 (KAGP…AHCE). Topologically, residues 27-305 (DDCSSHCDLA…RQEAGLGESS (279 aa)) are extracellular. 17 cysteine pairs are disulfide-bonded: C29/C40, C33/C46, C48/C57, C66/C71, C79/C88, C95/C107, C101/C117, C119/C128, C135/C148, C142/C160, C162/C171, C178/C189, C183/C198, C200/C209, C216/C227, C221/C236, and C238/C247. N157 is a glycosylation site (N-linked (GlcNAc...) asparagine). The 37-residue stretch at 174 to 210 (NVDDCLMRPCANGATCIDGINRFSCLCPEGFAGRFCT) folds into the EGF-like 5; calcium-binding domain. The EGF-like 6; calcium-binding domain occupies 212–248 (NLDDCASRPCQRGARCRDRVHDFDCLCPSGYGGKTCE). Residues 306–326 (LVALVVFGSLTAALVLATVLL) traverse the membrane as a helical segment. Residues 327 to 382 (TLRAWRRGICPTGPCCDPAPHYAPARQDQECQVSMLPAGFPLSPDLPPEPGKTTAL) lie on the Cytoplasmic side of the membrane.

Its subcellular location is the membrane. Its function is as follows. Regulates adipogenesis. This Rattus norvegicus (Rat) protein is Protein delta homolog 2 (Dlk2).